The sequence spans 432 residues: Glutamyl-tRNA reductase (432 aa).

Substrate-binding positions include 49 to 52 (TCNR), Ser-101, 106 to 108 (EPQ), and Gln-112. The Nucleophile role is filled by Cys-50. Residue 181 to 186 (GAGETI) coordinates NADP(+). The disordered stretch occupies residues 407-432 (FPEKPGYQHPPIATPIVRTDDADPAP).

This sequence belongs to the glutamyl-tRNA reductase family. In terms of assembly, homodimer.

It carries out the reaction (S)-4-amino-5-oxopentanoate + tRNA(Glu) + NADP(+) = L-glutamyl-tRNA(Glu) + NADPH + H(+). The protein operates within porphyrin-containing compound metabolism; protoporphyrin-IX biosynthesis; 5-aminolevulinate from L-glutamyl-tRNA(Glu): step 1/2. Functionally, catalyzes the NADPH-dependent reduction of glutamyl-tRNA(Glu) to glutamate 1-semialdehyde (GSA). This chain is Glutamyl-tRNA reductase, found in Xanthomonas oryzae pv. oryzae (strain MAFF 311018).